Consider the following 466-residue polypeptide: Glucose-6-phosphate 1-dehydrogenase 1 (466 aa).

Residues Ser-48, 88–89 (DV), and Lys-141 each bind NADP(+). Substrate is bound by residues His-171, Lys-175, Glu-209, and Asp-228. Catalysis depends on His-233, which acts as the Proton acceptor. Substrate contacts are provided by Lys-319 and Lys-324.

The protein belongs to the glucose-6-phosphate dehydrogenase family.

The catalysed reaction is D-glucose 6-phosphate + NADP(+) = 6-phospho-D-glucono-1,5-lactone + NADPH + H(+). It functions in the pathway carbohydrate degradation; pentose phosphate pathway; D-ribulose 5-phosphate from D-glucose 6-phosphate (oxidative stage): step 1/3. In terms of biological role, catalyzes the oxidation of glucose 6-phosphate to 6-phosphogluconolactone. The protein is Glucose-6-phosphate 1-dehydrogenase 1 of Mycobacterium tuberculosis (strain CDC 1551 / Oshkosh).